The chain runs to 200 residues: MARCKS-related protein (200 aa).

The segment at 1-200 (MGSQSSKAPR…PTPASAEQNE (200 aa)) is disordered. Gly2 carries the N-myristoyl glycine lipid modification. Position 14 is a phosphothreonine (Thr14). Positions 16 to 26 (EEAAGASPAKA) are enriched in low complexity. 3 positions are modified to phosphoserine: Ser22, Ser36, and Ser48. Over residues 53 to 64 (GTDEAAGATGDA) the composition is skewed to low complexity. Phosphoserine is present on Ser71. The span at 74–85 (AEAKGEVAPKET) shows a compositional bias: basic and acidic residues. Thr85 carries the post-translational modification Phosphothreonine. Positions 86–98 (PKKKKKFSFKKPF) are enriched in basic residues. The segment at 87-110 (KKKKKFSFKKPFKLSGLSFKRNRK) is effector domain involved in lipid-binding and calmodulin-binding. Phosphoserine; by PKC is present on residues Ser93, Ser101, and Ser104. Residue Ser119 is modified to Phosphoserine. Ser120 carries the post-translational modification Phosphoserine; by MAPK8. Ser132 and Ser135 each carry phosphoserine. Residue Thr148 is modified to Phosphothreonine; by MAPK8. Ser151, Ser162, and Ser165 each carry phosphoserine. Positions 156–165 (AKGAEASAAS) are enriched in low complexity. Thr170 bears the Phosphothreonine mark. The span at 178-200 (AAEPSTPSGPESGPTPASAEQNE) shows a compositional bias: low complexity. Residue Thr183 is modified to Phosphothreonine; by MAPK8. The residue at position 192 (Thr192) is a Phosphothreonine.

It belongs to the MARCKS family. Binds to filamentous actin (F-actin), but not to monomeric G-actin, independently of its phosphorylation status. Interacts with calmodulin. In terms of processing, phosphorylated. Phosphorylation at Ser-120 and Thr-183 is non-redundantly catalyzed by MAPK8 in vivo. Phosphorylation at Thr-148 is preferentially catalyzed by MAPK8 in vivo, but this modification can also be catalyzed by other kinases in the absence of MAPK8. May be phosphorylated by protein kinase C, which disrupts the interaction with calmodulin. Expressed at high levels in brain cortex and hippocampus, including dentate gyrus, anterior olfactory nucleus, primary olfactory cortex, entorhinal cortex, medial preoptic area and dorsomedial hypothalamic nucleus (at protein level). Expressed in neuronal cells (at protein level). Detected in the retina. Strongly expressed in testis and uterus; expressed at lower levels in cerebellum, cerebrum, adipose tissue, spleen, kidney, thyroid, liver, lung, skeletal muscle and heart. Detected in T-cells and B-cells.

Its subcellular location is the cytoplasm. It localises to the cytoskeleton. The protein localises to the cell membrane. Involved in the control of cell movement by regulating actin cytoskeleton homeostasis and filopodium and lamellipodium formation. When unphosphorylated, induces cell migration. When phosphorylated by MAPK8, induces actin bundles formation and stabilization, thereby reducing actin plasticity, hence restricting cell movement, including neuronal migration. May be involved in coupling the protein kinase C and calmodulin signal transduction systems. The protein is MARCKS-related protein (Marcksl1) of Mus musculus (Mouse).